We begin with the raw amino-acid sequence, 570 residues long: MFS-type transporter pigP (570 aa).

Positions 14 to 54 (GMIKKAHPEQTPPDVSHEGDVATEKGDSDGVEQAAPTGPTD) are disordered. A compositionally biased stretch (basic and acidic residues) spans 28–41 (VSHEGDVATEKGDS). The next 7 helical transmembrane spans lie at 65–85 (VMIMSGITLVCFLMLLDTSII), 99–119 (LPDVGWYGSAYLLASASLVPL), 131–151 (WSFVSFFAVFELGSLLCGVAT), 162–182 (VAGMGGSGIQNGAFTIIAGCV), 192–212 (GLLMGFAQLGIVIGPLIGGAF), 221–241 (CFYINLPIGAVVGLLLFFVHI), and 263–283 (LVGFVLFAPAAVQFLLALQYG). Residue N290 is glycosylated (N-linked (GlcNAc...) asparagine). The next 7 membrane-spanning stretches (helical) occupy residues 293 to 313 (VVIGLFCGAGATFVCFILWEW), 336 to 356 (VVYGFLMATLLVASYYLPIYF), 369 to 389 (VYILPSILSQSALAIISGALV), 392 to 412 (FGYYLPWSLAGGIVSSVGNGL), 425 to 445 (WIGYQILLGAGRGAGLQMPII), 455 to 475 (LIPVAMALIMFCQSFFGSTFL), and 533 to 553 (VFYLAVGAAVATFVFSCGMGW).

This sequence belongs to the major facilitator superfamily. TCR/Tet family.

Its subcellular location is the cell membrane. Functionally, MFS-type transporter; part of the gene cluster that mediates the biosynthesis of azaphilone pigments (MonAzPs), very widely used as food colorant. The polypeptide is MFS-type transporter pigP (Monascus ruber (Mold)).